The chain runs to 410 residues: Probable inactive allantoicase (410 aa).

Belongs to the allantoicase family.

In terms of biological role, the function of this enzyme is unclear as allantoicase activity is not known to exist in mammals. The sequence is that of Probable inactive allantoicase (ALLC) from Macaca fascicularis (Crab-eating macaque).